Consider the following 488-residue polypeptide: Glutamyl-tRNA(Gln) amidotransferase subunit A (488 aa).

Residues Lys-77 and Ser-152 each act as charge relay system in the active site. Ser-176 acts as the Acyl-ester intermediate in catalysis.

The protein belongs to the amidase family. GatA subfamily. As to quaternary structure, heterotrimer of A, B and C subunits.

The catalysed reaction is L-glutamyl-tRNA(Gln) + L-glutamine + ATP + H2O = L-glutaminyl-tRNA(Gln) + L-glutamate + ADP + phosphate + H(+). Functionally, allows the formation of correctly charged Gln-tRNA(Gln) through the transamidation of misacylated Glu-tRNA(Gln) in organisms which lack glutaminyl-tRNA synthetase. The reaction takes place in the presence of glutamine and ATP through an activated gamma-phospho-Glu-tRNA(Gln). The chain is Glutamyl-tRNA(Gln) amidotransferase subunit A from Streptococcus sanguinis (strain SK36).